The sequence spans 181 residues: Organelle RRM domain-containing protein 6, chloroplastic (181 aa).

A chloroplast-targeting transit peptide spans 1-44; the sequence is MAISLGRVVVPSCTISGDRLFIPNFSAICSVSCGRINVGTGVIS. The 79-residue stretch at 77–155 folds into the RRM domain; that stretch reads TKLYVSGLSF…RVIFVEEAKT (79 aa). Basic and acidic residues predominate over residues 155-169; it reads TRSDMSRAKPRRDFP. The disordered stretch occupies residues 155–181; that stretch reads TRSDMSRAKPRRDFPKPQSKPRTFRTW.

Interacts with MORF8/RIP1, MORF2/RIP2, MORF9/RIP9 and VAR3/OZ1.

Its subcellular location is the plastid. It is found in the chloroplast. Involved in C-to-U editing of chloroplastic RNA. Required for the photosynthetic subunit psbF transcript editing in chloroplast. This is Organelle RRM domain-containing protein 6, chloroplastic from Arabidopsis thaliana (Mouse-ear cress).